Reading from the N-terminus, the 739-residue chain is Ankyrin repeat and SAM domain-containing protein 6 (739 aa).

ANK repeat units follow at residues 1 to 30, 57 to 86, 91 to 120, 124 to 156, 158 to 188, 192 to 221, 226 to 255, and 259 to 290; these read MGAS…FVDD, LEVR…DARV, TGWS…DPDH, LGNT…RPDD, KKRP…QVDV, DGAS…DVDR, HGWT…DVQL, and NGYT…LVDK. Residues 295 to 305 show a composition bias toward basic residues; the sequence is QRGKSALRRRA. Disordered stretches follow at residues 295–320 and 449–645; these read QRGK…TGLK and LRDA…ITDE. The segment covering 462 to 478 has biased composition (polar residues); the sequence is PGRSSAGSDTASISRVV. 2 stretches are compositionally biased toward low complexity: residues 490–506 and 582–592; these read GPSP…HSSG and SSRSKSTSPTL. A compositionally biased stretch (pro residues) spans 593-603; it reads TPSPSPTPAHT. The segment covering 604–641 has biased composition (low complexity); the sequence is PAPAHTPAHRPTGASADSQGSASTQQRSRSSGGSSSGT. An SAM domain is found at 643 to 706; the sequence is TDEDELSGIL…LAAISELNAG (64 aa).

It localises to the cell projection. The protein localises to the cilium. Functionally, required for renal function. The polypeptide is Ankyrin repeat and SAM domain-containing protein 6 (anks6) (Danio rerio (Zebrafish)).